Here is a 160-residue protein sequence, read N- to C-terminus: Transmembrane protein 220 (160 aa).

A run of 5 helical transmembrane segments spans residues 3–23 (PALW…AALV), 30–50 (AEVW…VGLN), 62–82 (ISAI…SYLL), 100–120 (GLVI…NPVG), and 125–145 (LAIA…IYIN).

It localises to the membrane. This chain is Transmembrane protein 220 (TMEM220), found in Homo sapiens (Human).